The chain runs to 1496 residues: Rap guanine nucleotide exchange factor 2 (1496 aa).

2 disordered regions span residues 40-59 (HVSS…SSSL) and 68-101 (SEAG…SDPL). The segment covering 83–94 (VDSEDDDDEEDI) has biased composition (acidic residues). 135 to 254 (AFANMTMSVR…VEEEGEIVMV (120 aa)) is an a nucleoside 3',5'-cyclic phosphate binding site. The 114-residue stretch at 267–380 (KGHIVIKGTS…RLLNIACAAK (114 aa)) folds into the N-terminal Ras-GEF domain. The PDZ domain maps to 385-470 (LMTLTKPSRE…ITVKTNLFVF (86 aa)). Ser-501 is modified (phosphoserine). Residues 606 to 692 (PDQVLRVFKA…GRYYLKNNME (87 aa)) form the Ras-associating domain. Thr-644 bears the Phosphothreonine; by PLK2 mark. The Ras-GEF domain maps to 717–944 (STVEVATQLS…SQGSANATVL (228 aa)). Ser-806 is subject to Phosphoserine; by PLK2. Residue Ser-930 is modified to Phosphoserine. Phosphoserine; by PLK2 is present on residues Ser-933 and Ser-1022. A disordered region spans residues 1002–1051 (PATSTLPKNPGDKKPVKSETSPVAPRAGPQQKVQPQQPLAQPQPPHKVSQ). Low complexity predominate over residues 1030 to 1041 (PQQKVQPQQPLA). Ser-1079, Ser-1088, Ser-1094, Ser-1115, Ser-1119, and Ser-1158 each carry phosphoserine. Residues 1093–1159 (GSLERHRKQA…RSSIVSNSSF (67 aa)) are disordered. Low complexity-rich tracts occupy residues 1110 to 1124 (SSQL…QSSP) and 1140 to 1159 (SDSG…NSSF). Ser-1175 is subject to Phosphoserine; by PLK2. Disordered stretches follow at residues 1224–1256 (STEE…SGSH), 1303–1369 (STKY…EEAK), and 1390–1496 (RKEG…VSAV). Over residues 1227 to 1237 (ELSHDQGDRAS) the composition is skewed to basic and acidic residues. Composition is skewed to polar residues over residues 1246–1256 (GSWTSCSSGSH) and 1306–1330 (YNRQ…SSTG). Residues 1440 to 1455 (PTEAPAPGQTPPAAAA) are compositionally biased toward low complexity. A compositionally biased stretch (acidic residues) spans 1485–1496 (AEEDEDEQVSAV).

The protein belongs to the RAPGEF2 family. In terms of assembly, found in a complex, at least composed of KIDINS220, MAGI2, NTRK1 and RAPGEF2; the complex is mainly formed at late endosomes in a neuronal growth factor (NGF)-dependent manner. Interacts (via C-terminal domain) with NEDD4 (via WW domains); this interaction leads to ubiquitination and degradation via the proteasome pathway in a cAMP-independent manner. Interacts with MAGI1 (via PDZ domain). Interacts with ADRB1 (via C-terminal PDZ motif); the interaction is direct. Interacts (via Ras-associating domain) with RAP1A (via GTP-bound active form). Interacts weakly with HRAS (via GDP- and GTP-bound forms). Interacts (via C-terminal domain) with MAGI2 (via PDZ and WW domains). Interacts with CDH1, CTNNB1 and TJP1. In terms of processing, ubiquitinated by NEDD4, leading to proteasomal degradation. Post-translationally, phosphorylation by PLK2 promotes its activity. As to expression, expressed in all layers of the cerebral cortex, hippocampus and cerebellum. Expressed in the cortical plate, cingulate cortex and the subventricular zone. Expressed in neurons and endocrine cells (at protein level). Expressed in melanoma cells.

Its subcellular location is the cytoplasm. It is found in the perinuclear region. The protein localises to the cell membrane. It localises to the late endosome. The protein resides in the cell junction. Functions as a guanine nucleotide exchange factor (GEF), which activates Rap and Ras family of small GTPases by exchanging bound GDP for free GTP in a cAMP-dependent manner. Serves as a link between cell surface receptors and Rap/Ras GTPases in intracellular signaling cascades. Also acts as an effector for Rap1 by direct association with Rap1-GTP thereby leading to the amplification of Rap1-mediated signaling. Shows weak activity on HRAS. It is controversial whether RAPGEF2 binds cAMP and cGMP or not. Its binding to ligand-activated beta-1 adrenergic receptor ADRB1 leads to the Ras activation through the G(s)-alpha signaling pathway. Involved in the cAMP-induced Ras and Erk1/2 signaling pathway that leads to sustained inhibition of long term melanogenesis by reducing dendrite extension and melanin synthesis. Also provides inhibitory signals for cell proliferation of melanoma cells and promotes their apoptosis in a cAMP-independent nanner. Regulates cAMP-induced neuritogenesis by mediating the Rap1/B-Raf/ERK signaling through a pathway that is independent on both PKA and RAPGEF3/RAPGEF4. Involved in neuron migration and in the formation of the major forebrain fiber connections forming the corpus callosum, the anterior commissure and the hippocampal commissure during brain development. Involved in neuronal growth factor (NGF)-induced sustained activation of Rap1 at late endosomes and in brain-derived neurotrophic factor (BDNF)-induced axon outgrowth of hippocampal neurons. Plays a role in the regulation of embryonic blood vessel formation and in the establishment of basal junction integrity and endothelial barrier function. May be involved in the regulation of the vascular endothelial growth factor receptor KDR and cadherin CDH5 expression at allantois endothelial cell-cell junctions. This is Rap guanine nucleotide exchange factor 2 (Rapgef2) from Mus musculus (Mouse).